A 186-amino-acid polypeptide reads, in one-letter code: NADH-quinone oxidoreductase subunit B (186 aa).

Residues Cys44, Cys45, Cys110, and Cys139 each contribute to the [4Fe-4S] cluster site.

Belongs to the complex I 20 kDa subunit family. NDH-1 is composed of 14 different subunits. Subunits NuoB, C, D, E, F, and G constitute the peripheral sector of the complex. [4Fe-4S] cluster is required as a cofactor.

The protein resides in the cell inner membrane. It carries out the reaction a quinone + NADH + 5 H(+)(in) = a quinol + NAD(+) + 4 H(+)(out). Functionally, NDH-1 shuttles electrons from NADH, via FMN and iron-sulfur (Fe-S) centers, to quinones in the respiratory chain. The immediate electron acceptor for the enzyme in this species is believed to be ubiquinone. Couples the redox reaction to proton translocation (for every two electrons transferred, four hydrogen ions are translocated across the cytoplasmic membrane), and thus conserves the redox energy in a proton gradient. The chain is NADH-quinone oxidoreductase subunit B from Leptospira borgpetersenii serovar Hardjo-bovis (strain JB197).